The chain runs to 486 residues: Pup--protein ligase (486 aa).

Glutamate 33 contacts Mg(2+). An ATP-binding site is contributed by arginine 76. Residue tyrosine 78 participates in Mg(2+) binding. Residue aspartate 80 is the Proton acceptor of the active site. Glutamate 86 is a Mg(2+) binding site. Residues threonine 89 and tryptophan 451 each contribute to the ATP site.

Belongs to the Pup ligase/Pup deamidase family. Pup-conjugating enzyme subfamily.

The catalysed reaction is ATP + [prokaryotic ubiquitin-like protein]-L-glutamate + [protein]-L-lysine = ADP + phosphate + N(6)-([prokaryotic ubiquitin-like protein]-gamma-L-glutamyl)-[protein]-L-lysine.. It participates in protein degradation; proteasomal Pup-dependent pathway. It functions in the pathway protein modification; protein pupylation. Functionally, catalyzes the covalent attachment of the prokaryotic ubiquitin-like protein modifier Pup to the proteasomal substrate proteins, thereby targeting them for proteasomal degradation. This tagging system is termed pupylation. The ligation reaction involves the side-chain carboxylate of the C-terminal glutamate of Pup and the side-chain amino group of a substrate lysine. This Bifidobacterium longum (strain NCC 2705) protein is Pup--protein ligase.